We begin with the raw amino-acid sequence, 293 residues long: CDP-abequose synthase (293 aa).

Substrate is bound at residue T113. Y130 functions as the Proton acceptor in the catalytic mechanism.

It belongs to the NAD(P)-dependent epimerase/dehydratase family.

The enzyme catalyses CDP-alpha-D-abequose + NADP(+) = CDP-4-dehydro-3,6-dideoxy-alpha-D-glucose + NADPH + H(+). It functions in the pathway bacterial outer membrane biogenesis; LPS O-antigen biosynthesis. The polypeptide is CDP-abequose synthase (Salmonella muenchen).